A 187-amino-acid chain; its full sequence is V-type ATP synthase subunit E (187 aa).

It belongs to the V-ATPase E subunit family.

Functionally, produces ATP from ADP in the presence of a proton gradient across the membrane. The polypeptide is V-type ATP synthase subunit E (Geotalea uraniireducens (strain Rf4) (Geobacter uraniireducens)).